Consider the following 298-residue polypeptide: Syntaxin-125 (298 aa).

M1 bears the N-acetylmethionine mark. Topologically, residues 1 to 274 are cytoplasmic; it reads MNDLFSNSFK…KSSRKWTCYA (274 aa). Positions 25–155 form a coiled coil; sequence TMNLDKFFED…NEYKETVERR (131 aa). A t-SNARE coiled-coil homology domain is found at 198-260; it reads ISEIQERHDA…RRGTDQLQDA (63 aa). Residues 275–295 form a helical; Anchor for type IV membrane protein membrane-spanning segment; sequence IILFIVIFILLLIPLLPHIML. Residues 296 to 298 are Vesicular-facing; that stretch reads MLK.

The protein belongs to the syntaxin family. In terms of assembly, part of the t-SNARE complex.

It localises to the membrane. Vesicle trafficking protein that functions in the secretory pathway. The polypeptide is Syntaxin-125 (SYP125) (Arabidopsis thaliana (Mouse-ear cress)).